Consider the following 269-residue polypeptide: Hydroxyethylthiazole kinase (269 aa).

Residue Met42 coordinates substrate. ATP is bound by residues Arg118 and Ser164. Gly191 serves as a coordination point for substrate.

This sequence belongs to the Thz kinase family. The cofactor is Mg(2+).

It carries out the reaction 5-(2-hydroxyethyl)-4-methylthiazole + ATP = 4-methyl-5-(2-phosphooxyethyl)-thiazole + ADP + H(+). Its pathway is cofactor biosynthesis; thiamine diphosphate biosynthesis; 4-methyl-5-(2-phosphoethyl)-thiazole from 5-(2-hydroxyethyl)-4-methylthiazole: step 1/1. Catalyzes the phosphorylation of the hydroxyl group of 4-methyl-5-beta-hydroxyethylthiazole (THZ). This chain is Hydroxyethylthiazole kinase, found in Listeria monocytogenes serotype 4a (strain HCC23).